Reading from the N-terminus, the 812-residue chain is MFSGMSLLLWGVLLGAALSVARPPSTLPDEVAPKTKTEVEPYSAQPGDRITLQCRLREDVQSINWVKNGVQLSETNRTRITGEEIQISNAGPEDNGVYACVTNGPSRTYTVLCSVNVSDALPSAEDDDEDDDNSSSEEKAAENSKPNRPLWSHPEKMEKKLHAVPAAKTVKFRCPANGTPTPTLRWLKNNRAFQQDQRIGGYKVRSQTWSLIMDSVVPSDKGNYTCIVENKYGAINHTYQLDVVERSPHRPILQAGLPANTSVTVGTTAEFSCKVYSDPQPHIQWLRHIEINGSRVASDGFPYVEILKTAGVNTSDKDMEVLHLRNVTFEDAGQYTCLAANSIGISHHSAWLTVLKVEDNKPALLASPLQLEIIIYCTGAAFVSAMVVTIIIFKMKHPSKKSDFNSQLAVHKLAKSIPVRRQVTVSGDSSSSMNSGVILVRRLSSSGTPMLSGLSEYELPEDPRWEVARDRLILGKPLGEGCFGQVVMAEAIGLDKEKPNKVTKVAVKMLKSDASEKDLSDLISEMEMMKMIGKHKNIINLLGACTQDGPLYVIVEYTSKGNLREYLRARRPPAMEYCYNPTCVPDQLLSFKDLVSCAYQVARGMDYLASKKCIHRDLAARNVLVTEDNIMKIADFGLARDIHHIDYYKKTTNGRLPVKWMAPEALFDRIYTHQSDVWSFGVLLWEIFTLGGSPYPGVPMEELFKLLKEGHRMDKPTNCTNELYMMMKDCWHAMPSQRPTFNQLVEDLDRILALSSNQEYLDLSMPVNQYSPCFPDTRSSTCSSGEDSMFSHDPLPDEPCLPKYSNGGLKKR.

Positions 1–20 (MFSGMSLLLWGVLLGAALSV) are cleaved as a signal peptide. The Extracellular portion of the chain corresponds to 21 to 371 (ARPPSTLPDE…PALLASPLQL (351 aa)). In terms of domain architecture, Ig-like C2-type 1 spans 25–118 (STLPDEVAPK…YTVLCSVNVS (94 aa)). An intrachain disulfide couples Cys-54 to Cys-100. N-linked (GlcNAc...) asparagine glycans are attached at residues Asn-76, Asn-116, Asn-133, Asn-223, Asn-236, Asn-260, Asn-292, Asn-313, and Asn-326. Positions 121 to 153 (LPSAEDDDEDDDNSSSEEKAAENSKPNRPLWSH) are disordered. Residues 124 to 135 (AEDDDEDDDNSS) show a composition bias toward acidic residues. Ig-like C2-type domains are found at residues 154–242 (PEKM…YQLD) and 251–353 (PILQ…AWLT). Cys-174 and Cys-226 are oxidised to a cystine. An intrachain disulfide couples Cys-273 to Cys-337. Residues 372-393 (EIIIYCTGAAFVSAMVVTIIIF) form a helical membrane-spanning segment. The Cytoplasmic portion of the chain corresponds to 394–812 (KMKHPSKKSD…KYSNGGLKKR (419 aa)). Phosphotyrosine; by autocatalysis is present on Tyr-457. A Protein kinase domain is found at 472-761 (LILGKPLGEG…LALSSNQEYL (290 aa)). ATP is bound by residues 478 to 484 (LGEGCFG), Lys-508, 556 to 558 (EYT), and Asn-562. 2 positions are modified to phosphotyrosine; by autocatalysis: Tyr-577 and Tyr-579. Asp-617 serves as the catalytic Proton acceptor. Arg-621 and Asp-635 together coordinate ATP. Phosphotyrosine; by autocatalysis occurs at positions 647, 648, 724, and 760. Residues 784 to 812 (SGEDSMFSHDPLPDEPCLPKYSNGGLKKR) are disordered.

This sequence belongs to the protein kinase superfamily. Tyr protein kinase family. Fibroblast growth factor receptor subfamily. Monomer. Homodimer after ligand binding. Interacts with il17rd. In terms of processing, autophosphorylated. Binding of FGF family members together with heparan sulfate proteoglycan or heparin promotes receptor dimerization and autophosphorylation on tyrosine residues. Autophosphorylation occurs in trans between the two FGFR molecules present in the dimer and proceeds in a highly ordered manner. Phosphotyrosine residues provide docking sites for interacting proteins and so are crucial for FGFR1 function and its regulation. Ubiquitinated. FGFR1 is rapidly ubiquitinated after autophosphorylation, leading to internalization and degradation. Post-translationally, N-glycosylated in the endoplasmic reticulum. The N-glycan chains undergo further maturation to an Endo H-resistant form in the Golgi apparatus.

It is found in the cell membrane. Its subcellular location is the nucleus. The protein resides in the cytoplasm. It localises to the cytosol. The protein localises to the cytoplasmic vesicle. It carries out the reaction L-tyrosyl-[protein] + ATP = O-phospho-L-tyrosyl-[protein] + ADP + H(+). Present in an inactive conformation in the absence of bound ligand. Ligand binding leads to dimerization and activation by sequential autophosphorylation on tyrosine residues. Functionally, tyrosine-protein kinase that acts as a cell-surface receptor for fibroblast growth factors and plays an essential role in the regulation of embryonic development, cell proliferation, differentiation and migration. Required for normal mesoderm patterning and normal skeletogenesis. Phosphorylates PLCG1, FRS2, GAB1 and SHB. Ligand binding leads to the activation of several signaling cascades. Activation of PLCG1 leads to the production of the cellular signaling molecules diacylglycerol and inositol-1,4,5-trisphosphate. Phosphorylation of FRS2 triggers recruitment of GRB2, GAB1, PIK3R1 and SOS1, and mediates activation of RAS, MAPK1/ERK2, MAPK3/ERK1 and the MAP kinase signaling pathway, as well as of the AKT1 signaling pathway. Promotes phosphorylation of SHC1, STAT1 and PTPN11/SHP2. In the nucleus, enhances RPS6KA1 and CREB1 activity and contributes to the regulation of transcription. FGFR1 signaling is down-regulated by ubiquitination, internalization and degradation. The sequence is that of Fibroblast growth factor receptor 1 (fgfr1) from Xenopus laevis (African clawed frog).